Consider the following 878-residue polypeptide: Aconitate hydratase A (878 aa).

Positions 426, 492, and 495 each coordinate [4Fe-4S] cluster.

Belongs to the aconitase/IPM isomerase family. As to quaternary structure, monomer. [4Fe-4S] cluster is required as a cofactor.

The catalysed reaction is citrate = D-threo-isocitrate. It carries out the reaction (2S,3R)-3-hydroxybutane-1,2,3-tricarboxylate = 2-methyl-cis-aconitate + H2O. It participates in carbohydrate metabolism; tricarboxylic acid cycle; isocitrate from oxaloacetate: step 2/2. It functions in the pathway organic acid metabolism; propanoate degradation. Its function is as follows. Involved in the catabolism of short chain fatty acids (SCFA) via the tricarboxylic acid (TCA)(acetyl degradation route) and probably the 2-methylcitrate cycle I (propionate degradation route). Catalyzes the reversible isomerization of citrate to isocitrate via cis-aconitate. Could catalyze the hydration of 2-methyl-cis-aconitate to yield (2R,3S)-2-methylisocitrate. The apo form of AcnA functions as a RNA-binding regulatory protein. The chain is Aconitate hydratase A (acnA) from Rickettsia prowazekii (strain Madrid E).